The chain runs to 461 residues: MATFSRQEFFQQLLQGCLLPTVQQGLDQIWLLLTICFACRLLWRLGLPSYLKHASTVAGGFFSLYHFFQLHMVWVVLLSLLCYLVLFLCRHSSHRGVFLSVTILIYLLMGEMHMVDTVTWHKMRGAQMIVAMKAVSLGFDLDRGEVGAVPSPVEFMGYLYFVGTIVFGPWISFHSYLQAVQGRPLSRRWLKKVARSLALALLCLVLSTCVGPYLFPYFIPLDGDRLLRNKKRKARGTMVRWLRAYESAVSFHFSNYFVGFLSEATATLAGAGFTEEKDHLEWDLTVSRPLNVELPRSMVEVVTSWNLPMSYWLNNYVFKNALRLGTFSAVLVTYAASALLHGFSFHLAAVLLSLAFITYVEHVLRKRLAQILSACILSKRCLPDCSHRHRLGLGVRALNLLFGALAIFHLSYLGSLFDVDVDDTTEEQGYGMAYTVHKWSELSWASHWVTFGCWIFYRLIG.

At 1–17 the chain is on the cytoplasmic side; that stretch reads MATFSRQEFFQQLLQGC. The chain crosses the membrane as a helical span at residues 18–38; it reads LLPTVQQGLDQIWLLLTICFA. Over 39–66 the chain is Extracellular; it reads CRLLWRLGLPSYLKHASTVAGGFFSLYH. Residues 67 to 87 traverse the membrane as a helical segment; it reads FFQLHMVWVVLLSLLCYLVLF. Topologically, residues 88–95 are cytoplasmic; the sequence is LCRHSSHR. The chain crosses the membrane as a helical span at residues 96–116; sequence GVFLSVTILIYLLMGEMHMVD. Residues 117–152 lie on the Extracellular side of the membrane; sequence TVTWHKMRGAQMIVAMKAVSLGFDLDRGEVGAVPSP. A helical membrane pass occupies residues 153–173; it reads VEFMGYLYFVGTIVFGPWISF. At 174-198 the chain is on the cytoplasmic side; sequence HSYLQAVQGRPLSRRWLKKVARSLA. The helical transmembrane segment at 199 to 219 threads the bilayer; that stretch reads LALLCLVLSTCVGPYLFPYFI. Residues 220 to 252 are Extracellular-facing; the sequence is PLDGDRLLRNKKRKARGTMVRWLRAYESAVSFH. Residues 253 to 273 traverse the membrane as a helical segment; that stretch reads FSNYFVGFLSEATATLAGAGF. The Cytoplasmic portion of the chain corresponds to 274–337; the sequence is TEEKDHLEWD…SAVLVTYAAS (64 aa). Residues 338 to 358 traverse the membrane as a helical segment; sequence ALLHGFSFHLAAVLLSLAFIT. His-341 is an active-site residue. The Extracellular portion of the chain corresponds to 359–396; that stretch reads YVEHVLRKRLAQILSACILSKRCLPDCSHRHRLGLGVR. A helical membrane pass occupies residues 397–417; it reads ALNLLFGALAIFHLSYLGSLF. Topologically, residues 418-461 are cytoplasmic; sequence DVDVDDTTEEQGYGMAYTVHKWSELSWASHWVTFGCWIFYRLIG.

The protein belongs to the membrane-bound acyltransferase family. Porcupine subfamily. Interacts with WNT1, WNT3, WNT3A, WNT4, WNT5A, WNT5B, WNT6, WNT7A and WNT7B. Expressed in brain, heart, kidney, liver, lung, muscle, spleen and testis. Isoform 4 is strongly expressed in kidney, liver, lung, spleen and testis. Isoform 1 is strongly expressed in brain, heart and muscle and poorly in kidney, liver, lung, spleen and testis.

Its subcellular location is the endoplasmic reticulum membrane. The catalysed reaction is [Wnt protein]-L-serine + (9Z)-hexadecenoyl-CoA = [Wnt protein]-O-(9Z)-hexadecenoyl-L-serine + CoA. Protein-serine O-palmitoleoyltransferase that acts as a key regulator of the Wnt signaling pathway by mediating the attachment of palmitoleate, a 16-carbon monounsaturated fatty acid (C16:1(9Z)), to Wnt proteins. Serine palmitoleoylation of WNT proteins is required for efficient binding to frizzled receptors. This is Protein-serine O-palmitoleoyltransferase porcupine from Mus musculus (Mouse).